The following is a 31-amino-acid chain: Photosystem II reaction center protein T (31 aa).

Residues 3-23 traverse the membrane as a helical segment; it reads SVAYILVLTMALSVIFFAIAF.

This sequence belongs to the PsbT family. In terms of assembly, PSII is composed of 1 copy each of membrane proteins PsbA, PsbB, PsbC, PsbD, PsbE, PsbF, PsbH, PsbI, PsbJ, PsbK, PsbL, PsbM, PsbT, PsbX, PsbY, PsbZ, Psb30/Ycf12, peripheral proteins PsbO, CyanoQ (PsbQ), PsbU, PsbV and a large number of cofactors. It forms dimeric complexes.

Its subcellular location is the cellular thylakoid membrane. Its function is as follows. Found at the monomer-monomer interface of the photosystem II (PS II) dimer, plays a role in assembly and dimerization of PSII. PSII is a light-driven water plastoquinone oxidoreductase, using light energy to abstract electrons from H(2)O, generating a proton gradient subsequently used for ATP formation. In Microcystis aeruginosa (strain NIES-843 / IAM M-2473), this protein is Photosystem II reaction center protein T.